We begin with the raw amino-acid sequence, 324 residues long: Malate dehydrogenase (324 aa).

NAD(+) is bound by residues 20-25 (GAGNVG) and Asp44. The substrate site is built by Arg93 and Arg99. NAD(+) contacts are provided by residues Asn106 and 129 to 131 (VTN). Substrate is bound by residues Asn131 and Arg162. Catalysis depends on His186, which acts as the Proton acceptor.

Belongs to the LDH/MDH superfamily. MDH type 3 family.

The enzyme catalyses (S)-malate + NAD(+) = oxaloacetate + NADH + H(+). Its function is as follows. Catalyzes the reversible oxidation of malate to oxaloacetate. This Synechocystis sp. (strain ATCC 27184 / PCC 6803 / Kazusa) protein is Malate dehydrogenase.